The primary structure comprises 110 residues: Parvalbumin alpha (110 aa).

EF-hand domains lie at 39–74 (KNAK…FAPE) and 78–110 (LSEK…VANS). 11 residues coordinate Ca(2+): aspartate 52, aspartate 54, serine 56, phenylalanine 58, glutamate 60, glutamate 63, aspartate 91, aspartate 93, aspartate 95, lysine 97, and glutamate 102.

The protein belongs to the parvalbumin family.

In terms of biological role, in muscle, parvalbumin is thought to be involved in relaxation after contraction. It binds two calcium ions. This Callorhinchus milii (Ghost shark) protein is Parvalbumin alpha.